The sequence spans 692 residues: Elongation factor G (692 aa).

Residues 8–282 enclose the tr-type G domain; the sequence is EKTRNIGIMA…AIVDYLPAPT (275 aa). GTP is bound by residues 17–24, 81–85, and 135–138; these read AHIDAGKT, DTPGH, and NKMD.

Belongs to the TRAFAC class translation factor GTPase superfamily. Classic translation factor GTPase family. EF-G/EF-2 subfamily.

It localises to the cytoplasm. In terms of biological role, catalyzes the GTP-dependent ribosomal translocation step during translation elongation. During this step, the ribosome changes from the pre-translocational (PRE) to the post-translocational (POST) state as the newly formed A-site-bound peptidyl-tRNA and P-site-bound deacylated tRNA move to the P and E sites, respectively. Catalyzes the coordinated movement of the two tRNA molecules, the mRNA and conformational changes in the ribosome. This Pelotomaculum thermopropionicum (strain DSM 13744 / JCM 10971 / SI) protein is Elongation factor G.